The following is a 209-amino-acid chain: Pyridoxal 5'-phosphate synthase subunit PdxT (209 aa).

58–60 serves as a coordination point for L-glutamine; that stretch reads GES. Residue Cys90 is the Nucleophile of the active site. L-glutamine-binding positions include Arg119 and 148–149; that span reads IR. Catalysis depends on charge relay system residues His185 and Glu187.

This sequence belongs to the glutaminase PdxT/SNO family. In the presence of PdxS, forms a dodecamer of heterodimers. Only shows activity in the heterodimer.

It catalyses the reaction aldehydo-D-ribose 5-phosphate + D-glyceraldehyde 3-phosphate + L-glutamine = pyridoxal 5'-phosphate + L-glutamate + phosphate + 3 H2O + H(+). The catalysed reaction is L-glutamine + H2O = L-glutamate + NH4(+). It functions in the pathway cofactor biosynthesis; pyridoxal 5'-phosphate biosynthesis. Its function is as follows. Catalyzes the hydrolysis of glutamine to glutamate and ammonia as part of the biosynthesis of pyridoxal 5'-phosphate. The resulting ammonia molecule is channeled to the active site of PdxS. This chain is Pyridoxal 5'-phosphate synthase subunit PdxT, found in Clavibacter sepedonicus (Clavibacter michiganensis subsp. sepedonicus).